Reading from the N-terminus, the 1399-residue chain is DNA-directed RNA polymerase subunit beta' (1399 aa).

4 residues coordinate Zn(2+): Cys70, Cys72, Cys85, and Cys88. Mg(2+) is bound by residues Asp460, Asp462, and Asp464. Residues Cys814, Cys888, Cys895, and Cys898 each coordinate Zn(2+).

The protein belongs to the RNA polymerase beta' chain family. As to quaternary structure, the RNAP catalytic core consists of 2 alpha, 1 beta, 1 beta' and 1 omega subunit. When a sigma factor is associated with the core the holoenzyme is formed, which can initiate transcription. It depends on Mg(2+) as a cofactor. Zn(2+) is required as a cofactor.

It catalyses the reaction RNA(n) + a ribonucleoside 5'-triphosphate = RNA(n+1) + diphosphate. In terms of biological role, DNA-dependent RNA polymerase catalyzes the transcription of DNA into RNA using the four ribonucleoside triphosphates as substrates. The chain is DNA-directed RNA polymerase subunit beta' from Pseudomonas entomophila (strain L48).